Consider the following 328-residue polypeptide: Tetraacyldisaccharide 4'-kinase (328 aa).

Residue 55 to 62 participates in ATP binding; the sequence is TVGGNGKT.

This sequence belongs to the LpxK family.

The enzyme catalyses a lipid A disaccharide + ATP = a lipid IVA + ADP + H(+). Its pathway is glycolipid biosynthesis; lipid IV(A) biosynthesis; lipid IV(A) from (3R)-3-hydroxytetradecanoyl-[acyl-carrier-protein] and UDP-N-acetyl-alpha-D-glucosamine: step 6/6. In terms of biological role, transfers the gamma-phosphate of ATP to the 4'-position of a tetraacyldisaccharide 1-phosphate intermediate (termed DS-1-P) to form tetraacyldisaccharide 1,4'-bis-phosphate (lipid IVA). This is Tetraacyldisaccharide 4'-kinase from Hamiltonella defensa subsp. Acyrthosiphon pisum (strain 5AT).